Reading from the N-terminus, the 181-residue chain is Adenine phosphoribosyltransferase (181 aa).

This sequence belongs to the purine/pyrimidine phosphoribosyltransferase family. Homodimer.

It localises to the cytoplasm. It catalyses the reaction AMP + diphosphate = 5-phospho-alpha-D-ribose 1-diphosphate + adenine. It functions in the pathway purine metabolism; AMP biosynthesis via salvage pathway; AMP from adenine: step 1/1. Catalyzes a salvage reaction resulting in the formation of AMP, that is energically less costly than de novo synthesis. The polypeptide is Adenine phosphoribosyltransferase (Colwellia psychrerythraea (strain 34H / ATCC BAA-681) (Vibrio psychroerythus)).